Here is a 285-residue protein sequence, read N- to C-terminus: MGRSSKDKRDAYYRLAKEQGWRARSAFKLLQLNEQFNLFEGAKRVVDLCAAPGSWSQVLSRELLKNIDTSIAADEKPMIVAVDLQPMAPIDGVCTLQLDITHPNTLSIILSHFGNEPADLVVSDGAPDVTGLHDLDEYIQAQILLAAFNLAVCVLKPGGKFVAKIFRGRDVSLLYSQLRLMFRKVSCAKPRSSRASSIESFVVCEDFNPPSNFQPDLTKPLCVIDPTNAHEIAPFIACGDLDGYDADATYPVEINMKKATLDVIQPPTAPPYKRAIELKHSKMMS.

Positions 53, 55, 83, 99, and 124 each coordinate S-adenosyl-L-methionine. The active-site Proton acceptor is lysine 164.

It belongs to the class I-like SAM-binding methyltransferase superfamily. RNA methyltransferase RlmE family. TRM7 subfamily.

Its subcellular location is the cytoplasm. It catalyses the reaction cytidine(32)/guanosine(34) in tRNA + 2 S-adenosyl-L-methionine = 2'-O-methylcytidine(32)/2'-O-methylguanosine(34) in tRNA + 2 S-adenosyl-L-homocysteine + 2 H(+). Its function is as follows. Methylates the 2'-O-ribose of nucleotides at positions 32 and 34 of the tRNA anticodon loop of substrate tRNAs. Requires trm732 for methylation of the cytidine at position 32 of the anticodon loop of substrate tRNAs. Requires trm734 for methylation of the nucleotide at position 34 of the anticodon loop of substrate tRNAs. Methylates tRNA(Phe). The chain is tRNA (cytidine(32)/guanosine(34)-2'-O)-methyltransferase from Schizosaccharomyces pombe (strain 972 / ATCC 24843) (Fission yeast).